We begin with the raw amino-acid sequence, 322 residues long: MEKKLAILTSGGDAPGMNAAIRATAKIAEYYGFEVYGIRRGYLGMLNDEIFPMTGRFVSGIIDKGGTVLLTARSEEFKEARFREIAANNLKKKGINYLVVIGGDGSYRGANLLYKEHGIKVVGIPGTIDNDICGTDFTLGFDTCLNTILDAMSKIRDTATSHERTILIQVMGRRAGDLALHACIAGGGDGIMIPEMDNPIEMLALQLKERRKNGKLHDIVLVAEGVGNVLDIEEKLKGHINSEIRSVVLGHIQRGGTPSGFDRVLASRMAAKAVEVLNKGEAGVMVGIEKNEMVTHPLEEACSVDKRKSIEKDYELALLLSK.

Gly-12 provides a ligand contact to ATP. Residue 22-26 participates in ADP binding; that stretch reads RATAK. Residues 73–74 and 103–106 each bind ATP; these read RS and GDGS. Asp-104 contributes to the Mg(2+) binding site. 127–129 is a binding site for substrate; it reads TID. Asp-129 serves as the catalytic Proton acceptor. Position 156 (Arg-156) interacts with ADP. Substrate is bound by residues Arg-164 and 171-173; that span reads MGR. Residues 187-189 and 215-217 each bind ADP; these read GGD and KLH. Substrate-binding positions include Glu-224, Arg-245, and 251–254; that span reads HIQR.

This sequence belongs to the phosphofructokinase type A (PFKA) family. ATP-dependent PFK group I subfamily. Prokaryotic clade 'B1' sub-subfamily. In terms of assembly, homotetramer. Mg(2+) serves as cofactor.

The protein localises to the cytoplasm. It carries out the reaction beta-D-fructose 6-phosphate + ATP = beta-D-fructose 1,6-bisphosphate + ADP + H(+). The protein operates within carbohydrate degradation; glycolysis; D-glyceraldehyde 3-phosphate and glycerone phosphate from D-glucose: step 3/4. Allosterically activated by ADP and other diphosphonucleosides, and allosterically inhibited by phosphoenolpyruvate. Its function is as follows. Catalyzes the phosphorylation of D-fructose 6-phosphate to fructose 1,6-bisphosphate by ATP, the first committing step of glycolysis. The sequence is that of ATP-dependent 6-phosphofructokinase from Fusobacterium nucleatum subsp. nucleatum (strain ATCC 25586 / DSM 15643 / BCRC 10681 / CIP 101130 / JCM 8532 / KCTC 2640 / LMG 13131 / VPI 4355).